Consider the following 343-residue polypeptide: Cilia- and flagella-associated protein 36 (343 aa).

A phosphoserine mark is found at Ser-85 and Ser-147. Residues 147–187 (SDLEQEEMKILREVLRKSKEEYDQEEERKRKKQSSEAKMEE) are a coiled coil. Residues 165-188 (KEEYDQEEERKRKKQSSEAKMEEL) form a disordered region. Ser-201 carries the phosphoserine modification. Basic and acidic residues-rich tracts occupy residues 279–293 (QKRD…DTRT) and 301–323 (QKGK…AEEK). A disordered region spans residues 279 to 323 (QKRDKLLSMRKDTRTKQIQNTEQKGKPTREAEEMTEKPEMTAEEK).

This sequence belongs to the CFAP36 family. As to quaternary structure, interacts with ARL3.

It localises to the nucleus. The protein localises to the cytoplasm. It is found in the cell projection. Its subcellular location is the cilium. The protein resides in the flagellum. In terms of biological role, may act as an effector for ARL3. The chain is Cilia- and flagella-associated protein 36 from Mus musculus (Mouse).